The sequence spans 847 residues: DNA mismatch repair protein MutS (847 aa).

ATP is bound at residue 602-609 (GPNMSGKS). Positions 788 to 807 (EKREASLPASRTDSQKVSEQ) are disordered. Residues 796 to 807 (ASRTDSQKVSEQ) show a composition bias toward polar residues.

The protein belongs to the DNA mismatch repair MutS family.

Its function is as follows. This protein is involved in the repair of mismatches in DNA. It is possible that it carries out the mismatch recognition step. This protein has a weak ATPase activity. In Streptococcus gordonii (strain Challis / ATCC 35105 / BCRC 15272 / CH1 / DL1 / V288), this protein is DNA mismatch repair protein MutS.